We begin with the raw amino-acid sequence, 65 residues long: Small hydrophobic protein (65 aa).

Over 1–20 the chain is Intravirion; the sequence is MGNTSITIEFTSKFWPYFTL. The interaction with host BCAP31 stretch occupies residues 6–15; sequence ITIEFTSKFW. A helical; Signal-anchor for type II membrane protein membrane pass occupies residues 21-44; sequence IHMILTLISLLIIITIMIAILNKL. An interaction with small-molecule inhibitor region spans residues 38–43; it reads IAILNK. Residues 45 to 65 lie on the Virion surface side of the membrane; sequence SEHKTFCNNTLELGQMHQINT. N-linked (GlcNAc...) asparagine; by host glycosylation occurs at asparagine 52.

Belongs to the orthopneumovirus small hydrophobic protein family. Homopentamer forming a funnel-like pore. Interacts with glycoprotein G; this interaction occurs on the surface of virion particles and infected cells. Interacts with host BCAP31 (via C-terminus); this interaction is direct. Four species of SH have been detected in infected cell cytoplasm: a 7.5 kDa non-glycosylated form (SH0), a 13-15 kDa form that contains one or two N-linked carbohydrate side chains of the high-mannose type (SHg), a 21-30 kDa polylactosaminoglycan-modified form of the protein (SHp), and the isoform generated by alternative translational initiation. Of these different forms, SH0 is by far the most abundant protein detected during virus infection. In terms of processing, tyrosine phosphorylated.

Its subcellular location is the virion membrane. It is found in the host cell membrane. The protein resides in the host Golgi apparatus membrane. It localises to the host endoplasmic reticulum membrane. Its activity is regulated as follows. Channel activity is inhibited by copper. Also inhibited by small-molecule pyronin B. Functionally, viroporin that forms a homopentameric ion channel displaying low ion selectivity. May play a role in virus morphogenesis and pathogenicity at various stages of the viral life cycle. Accumulates at the membrane of the Golgi apparatus in infected cells and may facilitate virus release by modifying the secretory pathway. May enhance host membrane permeability and disrupt cellular ion homeostasis, which can be sensed as damage-associated molecular patterns/danger signals, triggering NLRP3 inflammasome activation and inflammatory immune response. Also inhibits host TNFA-mediated signaling pathway and may delay apoptosis, allowing time for the virus to replicate. This Homo sapiens (Human) protein is Small hydrophobic protein.